Reading from the N-terminus, the 205-residue chain is N-(5'-phosphoribosyl)anthranilate isomerase (205 aa).

The protein belongs to the TrpF family.

The enzyme catalyses N-(5-phospho-beta-D-ribosyl)anthranilate = 1-(2-carboxyphenylamino)-1-deoxy-D-ribulose 5-phosphate. It participates in amino-acid biosynthesis; L-tryptophan biosynthesis; L-tryptophan from chorismate: step 3/5. The sequence is that of N-(5'-phosphoribosyl)anthranilate isomerase from Acidiphilium cryptum (strain JF-5).